The sequence spans 1068 residues: MLSLLIIRATQFAITSFRCESTIYRYCAKYYYIGFHNHKDLIGVKEFCGKHYILKIIHYHMKAYYMYPDIRGDLISFTSDDDVWLLSLKDMKPLRITSGLGVSTRPKISPSGRKVAFSVIWLKSGKQGGDIYVVEDGQARRVTYFGSRNSRVAGWISEDEIIVITDFHTPFIQWTEAYKVNVNNGKTEKLPFGMLSNIVIKDDIIVIARGYQDLPNWKGYKGGTKGELWISSDGGKTFEKFVSLDGNVSWPMIVRERVYFLSDHEGVGNLYSVDLKGKDLRRHTNFTDYYCRNASSDGKRIVFQNAGDIYLYDPEKDSLTKLDINLPTDRKKKQPKFVNVMEYMNEAVVNGNYIALVSRGKVFLMRPWDGPSVQLGKKQGVKYRQIQVLPNGDVIGVNDEDKLVILGKDGSEKVINKDFSRIERVKVSPDGKKVLLSNNKLELWVYEIDNDNARLIDKSEYDLILEFDWHPNAEWFAYAFPEGYYTQSIKLAHIDGKVVRITTPYGYDFSPSFDPDGRYLYFLAARHLDPTNDKVIFNLSFQRVVKPYLVVLGNYYSPFNQPLDEANSNDKNVIIEGIEDRVVPFPIEEENYVQIAGAKNNKIFLFSYPIRGLRSQTGDVFGRLEVYDLENKAKELYADNVSSFSLSSDKSKILLILKDSLRLFDVNVKPDFNSTGRKGGVIDLSRVKVYVEPEKEWRQMLRETWKLMKQNYWNEERLKNWDSILPKYERLLDRISTRFELSDVIQEMQGETRTSHSYETAYDYDTPEPLSVGGLGAEFEYDESNKCYKITKIYVGDSTNENERSPLRDPGVQLNVGDCIKNIDGEDANGNIYSHLINKDQVILDVITADGKNKRVTVKVLKDERFLIYRYWVEKNREYVHEKSKGRLGYIHIPDMMYQGFAEFYRLFMSEFHREGLVVDVRFNRGGFVSGLLLEKLLLKRVGYDYPRNGKPIPMPYFSSPKVLVGITNEHAGSDGDIFSFLFKKYKLGVLIGRRTWGGVVGIRPRYRLVDKTYISQPEFAVNFEDVGFGIENYGVDPDIVVEIKPDDYVNNRDTQLDTAIELALKQL.

The tract at residues 61-326 (MKAYYMYPDI…DSLTKLDINL (266 aa)) is six-bladed beta propeller. The interval 338 to 686 (VNVMEYMNEA…RKGGVIDLSR (349 aa)) is seven-bladed beta propeller. The segment at 692-762 (EPEKEWRQML…RTSHSYETAY (71 aa)) is C-1. The active-site Charge relay system is the H756. The PDZ-like stretch occupies residues 771-864 (SVGGLGAEFE…RVTVKVLKDE (94 aa)). The segment at 865–1068 (RFLIYRYWVE…TAIELALKQL (204 aa)) is C-2. G927 serves as a coordination point for substrate. Residue S974 is the Nucleophile of the active site. E1032 acts as the Charge relay system in catalysis.

This sequence belongs to the peptidase S41B family.

It localises to the cytoplasm. In terms of biological role, degrades oligopeptides in a sequential manner. This Saccharolobus solfataricus (strain ATCC 35092 / DSM 1617 / JCM 11322 / P2) (Sulfolobus solfataricus) protein is Tricorn protease homolog (tri).